Consider the following 249-residue polypeptide: ATP synthase subunit a (249 aa).

6 helical membrane passes run 30–50 (SAYMLVAVAVISLLMIGGVAG), 84–104 (FFPLVFSLFMFIMISNMVGII), 114–134 (LIVTAALALLVFLTVLIYGFY), 143–163 (IFVPSGVPVFILPLVVFIEVF), 196–216 (LLAGLGIAGYFGAVLPLGMVI), and 221–241 (LELLVAFLQAYVFAILTCIYL).

This sequence belongs to the ATPase A chain family. As to quaternary structure, F-type ATPases have 2 components, CF(1) - the catalytic core - and CF(0) - the membrane proton channel. CF(1) has five subunits: alpha(3), beta(3), gamma(1), delta(1), epsilon(1). CF(0) has four main subunits: a, b, b' and c.

Its subcellular location is the cell inner membrane. Functionally, key component of the proton channel; it plays a direct role in the translocation of protons across the membrane. The polypeptide is ATP synthase subunit a (Rhodopseudomonas palustris (strain BisB18)).